We begin with the raw amino-acid sequence, 790 residues long: uncharacterized protein (790 aa).

Residues 37 to 172 (APVPVPVNGN…NGGVIDAKIK (136 aa)) enclose the TBDR plug domain. The TBDR beta-barrel domain maps to 178-790 (DSKVKLGYRT…TFWLDVSMKF (613 aa)).

The protein belongs to the TonB-dependent receptor family.

The protein resides in the cell outer membrane. This is an uncharacterized protein from Escherichia coli (strain K12).